The sequence spans 94 residues: Integration host factor subunit beta (94 aa).

It belongs to the bacterial histone-like protein family. In terms of assembly, heterodimer of an alpha and a beta chain.

Its function is as follows. This protein is one of the two subunits of integration host factor, a specific DNA-binding protein that functions in genetic recombination as well as in transcriptional and translational control. The sequence is that of Integration host factor subunit beta from Chelativorans sp. (strain BNC1).